A 1843-amino-acid polypeptide reads, in one-letter code: Proteasome activator complex subunit 4 (1843 aa).

Residues 1–11 (MEPAERAGVGE) are compositionally biased toward low complexity. A disordered region spans residues 1-25 (MEPAERAGVGEPPEPGGRPEPGPRG). Residues 12 to 22 (PPEPGGRPEPG) are compositionally biased toward pro residues. 2 HEAT repeats span residues 475–519 (PEGP…LVDC) and 998–1037 (NFCC…NHSG). Phosphoserine is present on Ser-1121. HEAT repeat units follow at residues 1179–1217 (RVLP…QLKR) and 1354–1392 (DAFL…GSKH). Ser-1614 is subject to Phosphoserine. HEAT repeat units lie at residues 1636–1674 (PHQV…YNLF) and 1680–1718 (EDAV…CNFL). A bromodomain-like (BRDL) region spans residues 1650–1738 (ARSSSWHARY…EQLCKTKLPK (89 aa)). The residue at position 1746 (Ser-1746) is a Phosphoserine.

It belongs to the BLM10 family. In terms of assembly, homodimer. Interacts with the 20S and 26S proteasomes. Component of the spermatoproteasome, a form of the proteasome specifically found in testis.

It localises to the cytoplasm. Its subcellular location is the cytosol. It is found in the nucleus. The protein resides in the nucleus speckle. In terms of biological role, associated component of the proteasome that specifically recognizes acetylated histones and promotes ATP- and ubiquitin-independent degradation of core histones during spermatogenesis and DNA damage response. Recognizes and binds acetylated histones via its bromodomain-like (BRDL) region and activates the proteasome by opening the gated channel for substrate entry. Binds to the core proteasome via its C-terminus, which occupies the same binding sites as the proteasomal ATPases, opening the closed structure of the proteasome via an active gating mechanism. Component of the spermatoproteasome, a form of the proteasome specifically found in testis: binds to acetylated histones and promotes degradation of histones, thereby participating actively to the exchange of histones during spermatogenesis. Also involved in DNA damage response in somatic cells, by promoting degradation of histones following DNA double-strand breaks. The protein is Proteasome activator complex subunit 4 of Homo sapiens (Human).